Reading from the N-terminus, the 223-residue chain is MKWLSKSWAVAVVLLVGCAGRQEFIPPQPNAEEYAPPKLDYTLPDAQSGSLYRHQYTMTLFQDRRAYRVGDVLTVVLSEETSSSKKAGTKFGKSSAVNFAAPTIGTKKFDELGVSIDGSRNFDGSASSSQGNKLQGAITVTVHDVLPNGVLRISGEKWLRLNQGDEFIRLTGIVRVDDITRNNQVSSQRIADARITYAGRGALADSNAAGWLTQFFNSPWVPF.

An N-terminal signal peptide occupies residues 1-17; the sequence is MKWLSKSWAVAVVLLVG. A lipid anchor (N-palmitoyl cysteine) is attached at Cys18. A lipid anchor (S-diacylglycerol cysteine) is attached at Cys18.

The protein belongs to the FlgH family. In terms of assembly, the basal body constitutes a major portion of the flagellar organelle and consists of four rings (L,P,S, and M) mounted on a central rod.

The protein resides in the cell outer membrane. The protein localises to the bacterial flagellum basal body. Functionally, assembles around the rod to form the L-ring and probably protects the motor/basal body from shearing forces during rotation. The polypeptide is Flagellar L-ring protein 2 (Vibrio parahaemolyticus serotype O3:K6 (strain RIMD 2210633)).